A 167-amino-acid polypeptide reads, in one-letter code: NAD(P)H-quinone oxidoreductase subunit I, chloroplastic (167 aa).

2 consecutive 4Fe-4S ferredoxin-type domains span residues 55 to 84 and 95 to 124; these read GRIH…VDWI and KNYS…MTEE. [4Fe-4S] cluster contacts are provided by C64, C67, C70, C74, C104, C107, C110, and C114.

It belongs to the complex I 23 kDa subunit family. As to quaternary structure, NDH is composed of at least 16 different subunits, 5 of which are encoded in the nucleus. The cofactor is [4Fe-4S] cluster.

The protein localises to the plastid. It is found in the chloroplast thylakoid membrane. It catalyses the reaction a plastoquinone + NADH + (n+1) H(+)(in) = a plastoquinol + NAD(+) + n H(+)(out). It carries out the reaction a plastoquinone + NADPH + (n+1) H(+)(in) = a plastoquinol + NADP(+) + n H(+)(out). Its function is as follows. NDH shuttles electrons from NAD(P)H:plastoquinone, via FMN and iron-sulfur (Fe-S) centers, to quinones in the photosynthetic chain and possibly in a chloroplast respiratory chain. The immediate electron acceptor for the enzyme in this species is believed to be plastoquinone. Couples the redox reaction to proton translocation, and thus conserves the redox energy in a proton gradient. In Adiantum capillus-veneris (Maidenhair fern), this protein is NAD(P)H-quinone oxidoreductase subunit I, chloroplastic.